The primary structure comprises 2432 residues: uncharacterized protein (2432 aa).

Belongs to the IIV-6 261R/396L/443R family.

This is an uncharacterized protein from Invertebrate iridescent virus 6 (IIV-6).